Reading from the N-terminus, the 212-residue chain is Fe/S biogenesis protein NfuA (212 aa).

Positions 169 and 172 each coordinate [4Fe-4S] cluster.

It belongs to the NfuA family. In terms of assembly, homodimer. [4Fe-4S] cluster serves as cofactor.

Involved in iron-sulfur cluster biogenesis. Binds a 4Fe-4S cluster, can transfer this cluster to apoproteins, and thereby intervenes in the maturation of Fe/S proteins. Could also act as a scaffold/chaperone for damaged Fe/S proteins. The protein is Fe/S biogenesis protein NfuA of Acinetobacter baumannii (strain SDF).